Reading from the N-terminus, the 180-residue chain is Small ribosomal subunit protein uS5 (180 aa).

Residues 13-76 (LEERVVQINR…EAAKKNLIRV (64 aa)) form the S5 DRBM domain.

The protein belongs to the universal ribosomal protein uS5 family. As to quaternary structure, part of the 30S ribosomal subunit. Contacts proteins S4 and S8.

In terms of biological role, with S4 and S12 plays an important role in translational accuracy. Its function is as follows. Located at the back of the 30S subunit body where it stabilizes the conformation of the head with respect to the body. The polypeptide is Small ribosomal subunit protein uS5 (Roseiflexus sp. (strain RS-1)).